The chain runs to 582 residues: Peptidyl-prolyl cis-trans isomerase FKBP10 (582 aa).

Positions 1–26 (MFPAGPPSHSLLRLPLLQLLLLVVQA) are cleaved as a signal peptide. 3 PPIase FKBP-type domains span residues 62–150 (GDFV…LDVW), 174–262 (GDFV…IDVH), and 286–374 (GDFM…IDFH). 7 N-linked (GlcNAc...) asparagine glycosylation sites follow: Asn70, Asn182, Asn294, Asn310, Asn352, Asn393, and Asn407. The PPIase FKBP-type 4 domain occupies 399-486 (GDFVRYHYNC…LFEVELVSRE (88 aa)). EF-hand domains follow at residues 497–532 (WHKDPPANLFEDMDLNKDGEVPPEEFSTFIKAQVSE) and 542–577 (DPEKTIGDMFQNQDRNQDGKITVDELKLKSDEDEER). Ca(2+) is bound by residues Asp510, Asn512, Asp514, Glu516, Glu521, Asp555, Asn557, Asp559, Lys561, and Glu566. Residues 533-582 (GKGRLMPGQDPEKTIGDMFQNQDRNQDGKITVDELKLKSDEDEERVHEEL) are disordered. The span at 556-582 (RNQDGKITVDELKLKSDEDEERVHEEL) shows a compositional bias: basic and acidic residues. The Prevents secretion from ER signature appears at 579–582 (HEEL).

Glycosylated and phosphorylated.

The protein resides in the endoplasmic reticulum lumen. It catalyses the reaction [protein]-peptidylproline (omega=180) = [protein]-peptidylproline (omega=0). With respect to regulation, inhibited by both FK506 and rapamycin, but not by cyclosporin A. In terms of biological role, PPIases accelerate the folding of proteins during protein synthesis. The chain is Peptidyl-prolyl cis-trans isomerase FKBP10 (FKBP10) from Homo sapiens (Human).